Consider the following 475-residue polypeptide: UDP-N-acetylmuramate--L-alanine ligase (475 aa).

114-120 (GTHGKTT) lines the ATP pocket.

Belongs to the MurCDEF family.

It localises to the cytoplasm. The enzyme catalyses UDP-N-acetyl-alpha-D-muramate + L-alanine + ATP = UDP-N-acetyl-alpha-D-muramoyl-L-alanine + ADP + phosphate + H(+). It functions in the pathway cell wall biogenesis; peptidoglycan biosynthesis. In terms of biological role, cell wall formation. The protein is UDP-N-acetylmuramate--L-alanine ligase of Bartonella quintana (strain Toulouse) (Rochalimaea quintana).